The chain runs to 81 residues: uncharacterized protein (81 aa).

Residues 46–81 (ASSPVVKRKSLVKRKSPVKRSPLKKRSQMRTSPCEA) are disordered. The span at 51–73 (VKRKSLVKRKSPVKRSPLKKRSQ) shows a compositional bias: basic residues.

This is an uncharacterized protein from Frog virus 3 (isolate Goorha) (FV-3).